Reading from the N-terminus, the 158-residue chain is Urease accessory protein UreE (158 aa).

A disordered region spans residues 133-158; sequence PEGGAYQAHSHDGHSHHQGHTHDHHD. Residues 141–158 are compositionally biased toward basic and acidic residues; sequence HSHDGHSHHQGHTHDHHD.

This sequence belongs to the UreE family.

Its subcellular location is the cytoplasm. Functionally, involved in urease metallocenter assembly. Binds nickel. Probably functions as a nickel donor during metallocenter assembly. The protein is Urease accessory protein UreE of Chelativorans sp. (strain BNC1).